The chain runs to 667 residues: DNA ligase (667 aa).

NAD(+) is bound by residues 32–36 (DSEYD), 81–82 (SL), and Glu-110. The active-site N6-AMP-lysine intermediate is the Lys-112. Positions 133, 167, 283, and 307 each coordinate NAD(+). Positions 401, 404, 419, and 424 each coordinate Zn(2+). The BRCT domain maps to 586 to 667 (EGHPEFSGKT…FVDKQNELNS (82 aa)).

Belongs to the NAD-dependent DNA ligase family. LigA subfamily. Mg(2+) is required as a cofactor. It depends on Mn(2+) as a cofactor.

It carries out the reaction NAD(+) + (deoxyribonucleotide)n-3'-hydroxyl + 5'-phospho-(deoxyribonucleotide)m = (deoxyribonucleotide)n+m + AMP + beta-nicotinamide D-nucleotide.. Its function is as follows. DNA ligase that catalyzes the formation of phosphodiester linkages between 5'-phosphoryl and 3'-hydroxyl groups in double-stranded DNA using NAD as a coenzyme and as the energy source for the reaction. It is essential for DNA replication and repair of damaged DNA. The polypeptide is DNA ligase (Staphylococcus aureus (strain MRSA252)).